A 79-amino-acid chain; its full sequence is Sulfur carrier protein TusA (79 aa).

The active-site Cysteine persulfide intermediate is C17.

It belongs to the sulfur carrier protein TusA family.

It localises to the cytoplasm. Its function is as follows. Sulfur carrier protein which probably makes part of a sulfur-relay system. This is Sulfur carrier protein TusA from Idiomarina loihiensis (strain ATCC BAA-735 / DSM 15497 / L2-TR).